The sequence spans 115 residues: UPF0738 protein SSP1780 (115 aa).

It belongs to the UPF0738 family.

The polypeptide is UPF0738 protein SSP1780 (Staphylococcus saprophyticus subsp. saprophyticus (strain ATCC 15305 / DSM 20229 / NCIMB 8711 / NCTC 7292 / S-41)).